The sequence spans 533 residues: Flavin-containing monooxygenase 5 (533 aa).

Arg-5 is modified (dimethylated arginine). Residues 10-14 (GGGVS), Glu-33, and 41-42 (LW) contribute to the FAD site. The residue at position 54 (Ser-54) is a Phosphoserine. Tyr-56 carries the phosphotyrosine modification. Phosphoserine is present on Ser-58. Position 62 to 63 (62 to 63 (NT)) interacts with FAD. An NADP(+)-binding site is contributed by 196–199 (SGGD). A Phosphoserine modification is found at Ser-280. Phosphothreonine is present on Thr-284. Ser-401 carries the post-translational modification Phosphoserine. A helical membrane pass occupies residues 510–530 (MVSAVTTGCFMLAVVFFAIIM).

The protein belongs to the FMO family. It depends on FAD as a cofactor. As to expression, expressed in liver.

It localises to the microsome membrane. The protein resides in the endoplasmic reticulum membrane. It catalyses the reaction N,N-dimethylaniline + NADPH + O2 + H(+) = N,N-dimethylaniline N-oxide + NADP(+) + H2O. The enzyme catalyses NADPH + O2 + H(+) = H2O2 + NADP(+). It carries out the reaction heptan-2-one + NADPH + O2 + H(+) = pentyl acetate + NADP(+) + H2O. The catalysed reaction is octan-3-one + NADPH + O2 + H(+) = pentyl propanoate + NADP(+) + H2O. It catalyses the reaction octan-3-one + NADPH + O2 + H(+) = ethyl hexanoate + NADP(+) + H2O. The enzyme catalyses hexan-3-one + NADPH + O2 + H(+) = ethyl butanoate + NADP(+) + H2O. It carries out the reaction hexan-3-one + NADPH + O2 + H(+) = propyl propanoate + NADP(+) + H2O. The catalysed reaction is heptan-4-one + NADPH + O2 + H(+) = propyl butanoate + NADP(+) + H2O. It catalyses the reaction (2E)-geranial + NADPH + O2 + H(+) = (1E)-2,6-dimethylhepta-1,5-dien-1-yl formate + NADP(+) + H2O. The enzyme catalyses sulcatone + NADPH + O2 + H(+) = 4-methylpent-3-en-1-yl acetate + NADP(+) + H2O. In terms of biological role, acts as a Baeyer-Villiger monooxygenase on a broad range of substrates. Catalyzes the insertion of an oxygen atom into a carbon-carbon bond adjacent to a carbonyl, which converts ketones to esters. Active on diverse carbonyl compounds, whereas soft nucleophiles are mostly non- or poorly reactive. In contrast with other forms of FMO it is non- or poorly active on 'classical' substrates such as drugs, pesticides, and dietary components containing soft nucleophilic heteroatoms. Able to oxidize drug molecules bearing a carbonyl group on an aliphatic chain, such as nabumetone and pentoxifylline. Also, in the absence of substrates, shows slow but yet significant NADPH oxidase activity. Acts as a positive modulator of cholesterol biosynthesis as well as glucose homeostasis, promoting metabolic aging via pleiotropic effects. The polypeptide is Flavin-containing monooxygenase 5 (FMO5) (Cavia porcellus (Guinea pig)).